A 449-amino-acid chain; its full sequence is MHPSSRANGPAPHKPYNPFYLQLYFWVIIAIILGALLGHCYPAVGQQLKPLGDAFIKLVKMIISPVIFLTIVTGIASVAHVGTVARVFGKAMVYFLFFSTLALLLGLVVAHVVHPGAGMNINPVDLHQGEIANYVEKSHDLTLVGFLMDIIPKTLLSPFVGDNILQVLFVAVLFGIALALAGERGKPVLNLLDALTVPVFKLVQMLMKMAPIGAFGAIAFTIGKYGVDSLVNLGGLVGSFYLTSLLFVLVILGAVSWLCGFSILKLIRYLKAELLLVLGTSSSESALPSLMEKMVQAGCGKSVVGLVVPTGYSFNLDGTNIYMTLAALFIAQATNTELTPAHQLALFLVAMLSSKGAAGVSGAGFITLAATLAVVPEVPIAGMALILGVDRFMSECRSLTNFIGNAVATLVVSRWENALNYEQLKIALDGSEAAYQSLHANDAEPSVSR.

8 consecutive transmembrane segments (helical) span residues 18-38 (PFYL…ALLG), 61-81 (MIIS…VAHV), 93-113 (VYFL…AHVV), 159-179 (FVGD…IALA), 202-222 (LVQM…AFTI), 244-264 (SLLF…FSIL), 346-366 (LFLV…AGFI), and 369-389 (AATL…ILGV).

It belongs to the dicarboxylate/amino acid:cation symporter (DAACS) (TC 2.A.23) family.

It localises to the cell inner membrane. In terms of biological role, responsible for the transport of dicarboxylates such as succinate, fumarate, and malate from the periplasm across the membrane. The sequence is that of C4-dicarboxylate transport protein from Xylella fastidiosa (strain M23).